Consider the following 317-residue polypeptide: Cyclin-T1-3 (317 aa).

Belongs to the cyclin family. Cyclin T subfamily. As to quaternary structure, interacts with CDKC-1 and CDKC-2. In terms of tissue distribution, abundantly expressed in flowers. Expressed in roots, seedlings, rosettes and stems.

This is Cyclin-T1-3 (CYCT1-3) from Arabidopsis thaliana (Mouse-ear cress).